The chain runs to 331 residues: 6-phosphogluconolactonase (331 aa).

The protein belongs to the cycloisomerase 2 family.

The catalysed reaction is 6-phospho-D-glucono-1,5-lactone + H2O = 6-phospho-D-gluconate + H(+). It participates in carbohydrate degradation; pentose phosphate pathway; D-ribulose 5-phosphate from D-glucose 6-phosphate (oxidative stage): step 2/3. Its function is as follows. Catalyzes the hydrolysis of 6-phosphogluconolactone to 6-phosphogluconate. The polypeptide is 6-phosphogluconolactonase (Salmonella arizonae (strain ATCC BAA-731 / CDC346-86 / RSK2980)).